The following is a 370-amino-acid chain: MTLSKWILSFGLSVCLIVSHPVSAERIKDLANIQGVRANQLIGYGLVVGLDGTGDQTQQTPFTVQSILSMLGQLGVNLPPGTNLQLRNVASVMVTATLPAFAKPGQQIDVTVSSMGNAKSLRGGTLLMTPLKGIDNQVYAVAQGSLVIGGAGASSAGSSVQINHLGAGRISAGAIVERAVPTVLGQGEYINLELRDTDFTTARRIVDTINSRFSYGTATALDGRVIQLRAPLNNNQRVTFISQIEDLDVIPAQGIAKVIINARTGSVVMNQMVTLESSAVAHGNLSVIINTQPIVSQPGPFAQRGETVVVPQSQIEVRSEEGNLMLLPGSASLADVVKALNAIGATPQDLLAILQALKASGSLRAELEII.

An N-terminal signal peptide occupies residues 1-24 (MTLSKWILSFGLSVCLIVSHPVSA).

This sequence belongs to the FlgI family. As to quaternary structure, the basal body constitutes a major portion of the flagellar organelle and consists of four rings (L,P,S, and M) mounted on a central rod.

Its subcellular location is the periplasm. The protein localises to the bacterial flagellum basal body. Its function is as follows. Assembles around the rod to form the L-ring and probably protects the motor/basal body from shearing forces during rotation. In Nitrosomonas europaea (strain ATCC 19718 / CIP 103999 / KCTC 2705 / NBRC 14298), this protein is Flagellar P-ring protein.